We begin with the raw amino-acid sequence, 442 residues long: Galactose/N-acetylgalactosamine-binding lectin CEL-III (442 aa).

A propeptide spans 1–10 (MVSLVPCGFA) (removed in mature form). Position 11 is a pyrrolidone carboxylic acid (glutamine 11). The segment at 11-304 (QVLCTNPLDI…DWEVPTATWN (294 aa)) is has hemagglutinating activity towards rabbit erythrocytes, but no hemolytic activity towards them. Cystine bridges form between cysteine 14–cysteine 59, cysteine 31–cysteine 48, and cysteine 72–cysteine 88. Residues aspartate 19 and 33-36 (DIVG) contribute to the D-galactose site. 2 consecutive Ricin B-type lectin domains span residues 28–102 (SKQC…RWRL) and 115–245 (EQVA…WSRP). 3 residues coordinate Ca(2+): aspartate 33, isoleucine 34, and glycine 36. Mg(2+) contacts are provided by asparagine 42 and isoleucine 43. Aspartate 49 is a binding site for D-galactose. Aspartate 53 contributes to the Ca(2+) binding site. Residues asparagine 82 and valine 83 each coordinate Mg(2+). Residues valine 117 and 131-134 (DVEG) contribute to the D-galactose site. Cysteine 129 and cysteine 146 are oxidised to a cystine. Residues aspartate 131, valine 132, and glycine 134 each contribute to the Ca(2+) site. Residue isoleucine 141 participates in Mg(2+) binding. 144–147 (YDCQ) provides a ligand contact to D-galactose. Ca(2+)-binding residues include aspartate 151, aspartate 178, valine 179, and glycine 181. A disulfide bond links cysteine 176 and cysteine 193. 178-181 (DVEG) contacts D-galactose. The Mg(2+) site is built by asparagine 187 and valine 188. 191–194 (YSCE) contributes to the D-galactose binding site. 4 residues coordinate Ca(2+): aspartate 198, aspartate 219, valine 220, and glycine 222. A disulfide bridge connects residues cysteine 217 and cysteine 234. 219 to 222 (DVEG) is a D-galactose binding site. Residues asparagine 228 and valine 229 each coordinate Mg(2+). 232–235 (YRCD) contacts D-galactose. Position 239 (aspartate 239) interacts with Ca(2+). Intrachain disulfides connect cysteine 249-cysteine 254 and cysteine 264-cysteine 281. Positions 261–293 (SNKCLDVSGDQGTGDVGTWQCDGLPDQRFKWVF) constitute a Ricin B-type lectin 3 domain. Ca(2+) contacts are provided by aspartate 266, valine 267, and glycine 269. Residue 266-269 (DVSG) coordinates D-galactose. Mg(2+) contacts are provided by aspartate 275 and valine 276. D-galactose contacts are provided by residues 279 to 282 (WQCD) and aspartate 286. Aspartate 286 contacts Ca(2+). The has a strong tendency to self-associate leading to formation of oligomers stretch occupies residues 294-442 (DDWEVPTATW…NEDCTFCTDI (149 aa)). Cystine bridges form between cysteine 308-cysteine 390, cysteine 377-cysteine 416, cysteine 425-cysteine 439, and cysteine 431-cysteine 436.

In terms of assembly, oligomerizes in the human and rabbit erythrocyte membranes. Oligomerization is induced by binding of beta-1,4-linked disaccharide ligands such as lactose, lactulose, N-acetyllactosamine and phenyl-beta-D-galactoside, but only a little by N-acetylgalactosamine and galactose, and not at all by melibiose in aqueous solution in the presence of high salt concentration and pH 10. Forms heptamers that assemble into larger 21mer oligomers, which may be inserted as a transmembrane pore to the erythrocyte membrane. Requires Ca(2+) as cofactor. The cofactor is Mg(2+). As to expression, expressed in body fluid (at protein level).

Its subcellular location is the secreted. Ca(2+) is required for hemolytic activity and the activity increases with increasing calcium concentration. Hemolytic activity is inhibited by N-acetylgalactosamine (GalNAc), lactose, lactulose, galactosamine, dextran with molecular masses greater than 4 kDa, to a lesser extent by inulin and only slightly by sucrose and melezitose, but not by glucose or mannose. The activity is abolished in the presence of 10 mM EDTA. Lactose-binding increases with increasing calcium concentration, but calcium has no effect on hemagglutinating activity. Cytotoxic effect on Madin-Darby canine kidney (MDCK) cell line is strongly inhibited by galactose, lactose and N-acetylgalactosamine (GalNAc), but not by raffinose, N-acetylglucosamine (GlcNAc), glucose, mannose, ribose or sucrose. Pore formation in artificial lactosyl ceramide (LacCer) or globotetraosylceramide (Gb4Cer) containing liposomes is strongly inhibited by lactose. Functionally, galactose/N-acetylgalactosamine (Gal/GalNAc)-binding lectin with hemolytic activity. Favors saccharides that have a beta-1,4 linkage at the non-reducing end rather than saccharides having alpha-1,6 or alpha-1,4 linkages. Binds lactose, lactulose, GalNAc, galactosamine, methyl alpha-galactopyranoside, methyl beta-galactopyranoside, N-acetyllactosamine, p-nitrophenyl beta-D-galactopyranoside (pNP-Gal), p-nitrophenyl N-acetyl-beta-D-galactosaminide (pNP-GalNAc), asialofetuin, and human erythrocyte membrane lipids lactosyl ceramide (LacCer) and globoside globotetraosylceramide (Gb4Cer). Binds moderately to galactose, melibiose, raffinose, fucose, methyl alpha-galactoside and methyl beta-galactoside. Binds weakly to glucose, mannose and N-acetylglucosamine (GlcNAc). Has hemolytic activity towards human (A, B and O-type), rabbit and rat erythrocytes, but not towards mouse, chicken or horse erythrocytes. Forms ion-permeable transmembrane pores in the erythrocyte membrane as well as in artificial liposomes containing human erythrocyte membrane lipids LacCer, Gb4Cer and galactosyl ceramide (GalCer) leading to destruction of the membrane. Has hemagglutinating activity towards rabbit, human and rat erythrocytes, and at relatively high concentrations towards chicken and horse erythrocytes, but not towards mouse erythrocytes. Has dose-dependent cytotoxic effect on Madin-Darby canine kidney (MDCK), African green monkey kidney (Vero) and human epithelia carcinoma (HeLa) cell lines, but Chinese hamster ovary (CHO), rat sarcoma (XC) and potoroo rat kangaroo kidney (PtK1) cells are highly resistant to the cytotoxic effect of this protein. Impairs malaria parasite development in malaria parasite infected transgenic A.stephensi mosquitoes expressing this protein specifically in their midguts. Binds to ookinetes and leads to strong dose-dependent inhibition of ookinete formation in vitro. Leads to severely impaired oocyst formation and significantly reduced sporozoite production of rodent malaria parasite P.berghei in the salivary glands of the transgenic mosquitoes. The parasite transmission to uninfected mice (vectorial competence) of these mosquitoes is significantly impaired. Also leads to severely impaired oocyst formation of human malaria parasite P.falciparum in transgenic mosquitoes fed on mature P.falciparum gametocyte cultures. May be involved in defense mechanisms acting as a toxic protein to foreign microorganisms. May act in defense against predators. The polypeptide is Galactose/N-acetylgalactosamine-binding lectin CEL-III (Pseudocnus echinatus (Sea cucumber)).